The chain runs to 438 residues: Xaa-Pro dipeptidase 2 (438 aa).

Positions 242, 253, 333, 378, and 414 each coordinate Mn(2+).

This sequence belongs to the peptidase M24B family. Bacterial-type prolidase subfamily. Mn(2+) serves as cofactor.

The enzyme catalyses Xaa-L-Pro dipeptide + H2O = an L-alpha-amino acid + L-proline. Its function is as follows. Splits dipeptides with a prolyl residue in the C-terminal position. The protein is Xaa-Pro dipeptidase 2 of Idiomarina loihiensis (strain ATCC BAA-735 / DSM 15497 / L2-TR).